The chain runs to 129 residues: Follitropin subunit beta (129 aa).

The N-terminal stretch at 1-20 is a signal peptide; it reads MKTVQFCFLFCCWKAICCNS. Intrachain disulfides connect cysteine 21–cysteine 69, cysteine 35–cysteine 84, cysteine 38–cysteine 122, cysteine 46–cysteine 100, cysteine 50–cysteine 102, and cysteine 105–cysteine 112. Residues asparagine 25 and asparagine 42 are each glycosylated (N-linked (GlcNAc...) asparagine).

The protein belongs to the glycoprotein hormones subunit beta family. As to quaternary structure, heterodimer. The active follitropin is a heterodimer composed of an alpha chain/CGA shared with other hormones and a unique beta chain/FSHB shown here.

The protein resides in the secreted. Functionally, together with the alpha chain CGA constitutes follitropin, the follicle-stimulating hormone, and provides its biological specificity to the hormone heterodimer. Binds FSHR, a G protein-coupled receptor, on target cells to activate downstream signaling pathways. Follitropin is involved in follicle development and spermatogenesis in reproductive organs. This chain is Follitropin subunit beta (FSHB), found in Aotus nancymaae (Ma's night monkey).